Consider the following 101-residue polypeptide: Ribonuclease kappa-B (101 aa).

The next 2 membrane-spanning stretches (helical) occupy residues 13 to 33 (ACGIVLSVWGVIMLSMLGIFF) and 68 to 88 (VGINCFIAAAIYVGVGAVSLC).

This sequence belongs to the RNase K family.

Its subcellular location is the membrane. In terms of biological role, endoribonuclease which preferentially cleaves ApU and ApG phosphodiester bonds. This Danio rerio (Zebrafish) protein is Ribonuclease kappa-B (rnasekb).